We begin with the raw amino-acid sequence, 592 residues long: Alanine aminotransferase, mitochondrial (592 aa).

The N-terminal 64 residues, methionine 1–histidine 64, are a transit peptide targeting the mitochondrion. The residue at position 77 (serine 77) is a Phosphoserine. Positions 258, 259, 284, 340, and 409 each coordinate pyridoxal 5'-phosphate. Lysine 412 is modified (N6-(pyridoxal phosphate)lysine). Arginine 421 serves as a coordination point for pyridoxal 5'-phosphate.

This sequence belongs to the class-I pyridoxal-phosphate-dependent aminotransferase family. Alanine aminotransferase subfamily. Homodimer. The cofactor is pyridoxal 5'-phosphate.

It localises to the mitochondrion matrix. It catalyses the reaction L-alanine + 2-oxoglutarate = pyruvate + L-glutamate. It functions in the pathway amino-acid degradation; L-alanine degradation via transaminase pathway; pyruvate from L-alanine: step 1/1. Functionally, alanine aminotransferase involved in both alanine biosynthesis and utilization. Under respiratory conditions, constitutes the sole pathway for alanine biosynthesis and catabolism. Under fermentative conditions, it plays a catabolic role and alanine is mainly synthesized through an alternative pathway. In Saccharomyces cerevisiae (strain ATCC 204508 / S288c) (Baker's yeast), this protein is Alanine aminotransferase, mitochondrial (ALT1).